Here is a 100-residue protein sequence, read N- to C-terminus: Small ribosomal subunit protein uS14c (100 aa).

This sequence belongs to the universal ribosomal protein uS14 family. Part of the 30S ribosomal subunit.

The protein resides in the plastid. Its subcellular location is the chloroplast. Functionally, binds 16S rRNA, required for the assembly of 30S particles. This is Small ribosomal subunit protein uS14c from Pleurastrum terricola (Filamentous green alga).